The sequence spans 767 residues: Pyrin (767 aa).

In terms of domain architecture, Pyrin spans 1–92 (MAKTLGDHLL…AEELRKATGT (92 aa)). The tract at residues 94–219 (HLIEENRVGG…LQGLYNNAPG (126 aa)) is disordered. Polar residues-rich tracts occupy residues 126–142 (GTQQ…SSQA), 165–176 (LDSQTKPWTRST), and 183–208 (TQGT…SSAG). A Phosphoserine modification is found at Ser241. The tract at residues 311–346 (TSLIGEERCPTSWTENGNGSPETTESSGETAGSILS) is disordered. Over residues 321–340 (TSWTENGNGSPETTESSGET) the composition is skewed to polar residues. The segment at 439–481 (QSLPQCPRHMKQVLLLFCEDHREPICLICRLSLEHQGHRVRPI) adopts a B box-type zinc-finger fold. Positions 444, 447, 467, and 473 each coordinate Zn(2+). The stretch at 481 to 510 (IEEAALEYKEQIREQLERLREMRGYVEEHR) forms a coiled coil. A required for homotrimerization and induction of pyroptosomes region spans residues 489 to 647 (KEQIREQLER…CFSEMLSSEM (159 aa)). Positions 697–719 (GGSEPKDYLHPQPAQDTPELHEI) are disordered.

As to quaternary structure, homotrimer. Interacts (via the B box-type zinc finger) with PSTPIP1. Interacts (via the B30.2/SPRY domain) with several components of the inflammasome complex, including CASP1 p20 and p10 subunits, CASP5, PYCARD, NLRP1, NLRP2 and NLRP3, as well as with unprocessed IL1B; this interaction may lead to autophagic degradation of these proteins. Component of the AIM2 PANoptosome complex, a multiprotein complex that drives inflammatory cell death (PANoptosis). Interacts with NFKBIA and RELA. Interacts weakly with VASP and ACTR3. Interacts with active ULK1 (phosphorylated on 'Ser-317') and BECN1 simultaneously. Also interacts with ATG16L1 (via WD repeats), and with ATG8 family members, including GABARAP, GABARAPL1 and, to a lesser extent, GABARAPL2, MAP1LC3A/LC3A and MAP1LC3C/LC3C. Interacts with TRIM21. Interacts with YWHAB, YWHAE, YWHAG, YWHAH, YWHAQ and YWHAZ; the interaction is required for the down-regulation of pyrin pro-inflammatory activity. Post-translationally, phosphorylation at Ser-241 is required for the interaction with 14-3-3 proteins and down-regulation of pyrin pro-inflammatory activity. In terms of processing, degraded along with the delivery of its substrates to autolysosomal compartments (at protein level). As to expression, expressed in spleen peripheral blood granulocytes. Not expressed in lymphocytes, thymus, testis, ovary, heart, brain, lung, liver, kidney and muscle.

It is found in the cytoplasm. Its subcellular location is the cytoskeleton. The protein localises to the cell projection. It localises to the ruffle. The protein resides in the lamellipodium. It is found in the cytoplasmic vesicle. Its subcellular location is the autophagosome. The protein localises to the nucleus. Functionally, involved in the regulation of innate immunity and the inflammatory response in response to IFNG/IFN-gamma. Organizes autophagic machinery by serving as a platform for the assembly of ULK1, Beclin 1/BECN1, ATG16L1, and ATG8 family members and recognizes specific autophagy targets, thus coordinating target recognition with assembly of the autophagic apparatus and initiation of autophagy. Acts as an autophagy receptor for the degradation of several inflammasome components, including CASP1, NLRP1 and NLRP3, hence preventing excessive IL1B- and IL18-mediated inflammation. However, it can also have a positive effect in the inflammatory pathway, acting as an innate immune sensor that triggers PYCARD/ASC specks formation, caspase-1 activation, and IL1B and IL18 production. Together with AIM2, also acts as a mediator of pyroptosis, necroptosis and apoptosis (PANoptosis), an integral part of host defense against pathogens, in response to bacterial infection. It is required for PSTPIP1-induced PYCARD/ASC oligomerization and inflammasome formation. Recruits PSTPIP1 to inflammasomes, and is required for PSTPIP1 oligomerization. This Mus musculus (Mouse) protein is Pyrin.